We begin with the raw amino-acid sequence, 93 residues long: YcgL domain-containing protein VIBHAR_01387 (93 aa).

One can recognise a YcgL domain in the interval 1–84; the sequence is MLCSIYKSSR…PPENLLEKYK (84 aa).

The polypeptide is YcgL domain-containing protein VIBHAR_01387 (Vibrio campbellii (strain ATCC BAA-1116)).